The chain runs to 168 residues: Small ribosomal subunit protein uS9 (168 aa).

The interval 1–38 (MAKIADSIDSAQADSVENVESYSTETPESAAPAAPRPV) is disordered. Polar residues predominate over residues 9–22 (DSAQADSVENVESY). A compositionally biased stretch (low complexity) spans 23-37 (STETPESAAPAAPRP).

The protein belongs to the universal ribosomal protein uS9 family.

This is Small ribosomal subunit protein uS9 from Leifsonia xyli subsp. xyli (strain CTCB07).